The chain runs to 197 residues: Protein U63 (197 aa).

Belongs to the herpesviridae UL92 family.

The protein is Protein U63 of Elephas maximus (Indian elephant).